We begin with the raw amino-acid sequence, 84 residues long: U21-theraphotoxin-Cg1c (84 aa).

The N-terminal stretch at 1 to 21 (MKVSVLITLAVLGVMFLLTSA) is a signal peptide. Residues 22–47 (EERGSDQMDSPAWLKSMERIFQSEER) constitute a propeptide that is removed on maturation. Disulfide bonds link Cys-49–Cys-63, Cys-56–Cys-68, and Cys-62–Cys-76.

The protein belongs to the neurotoxin 10 (Hwtx-1) family. 05 (F4a) subfamily. As to expression, expressed by the venom gland.

It is found in the secreted. Probable ion channel inhibitor. This Chilobrachys guangxiensis (Chinese earth tiger tarantula) protein is U21-theraphotoxin-Cg1c.